Here is a 547-residue protein sequence, read N- to C-terminus: Chaperonin GroEL (547 aa).

Residues 30–33 (TLGP), lysine 51, 87–91 (DGTTT), glycine 415, and aspartate 496 each bind ATP. The disordered stretch occupies residues 527 to 547 (KKDSPAMPGGGGMGGMGGMDF). The span at 534-547 (PGGGGMGGMGGMDF) shows a compositional bias: gly residues.

Belongs to the chaperonin (HSP60) family. Forms a cylinder of 14 subunits composed of two heptameric rings stacked back-to-back. Interacts with the co-chaperonin GroES.

Its subcellular location is the cytoplasm. It carries out the reaction ATP + H2O + a folded polypeptide = ADP + phosphate + an unfolded polypeptide.. In terms of biological role, together with its co-chaperonin GroES, plays an essential role in assisting protein folding. The GroEL-GroES system forms a nano-cage that allows encapsulation of the non-native substrate proteins and provides a physical environment optimized to promote and accelerate protein folding. This chain is Chaperonin GroEL, found in Methylocella silvestris (strain DSM 15510 / CIP 108128 / LMG 27833 / NCIMB 13906 / BL2).